Consider the following 567-residue polypeptide: MSDPTRPARIDERSRNVTEGVMRAPNRSMYYAMGYRETDFGKPMVGVASAHSTITPCNSGLQPLADTVAAALKEAGANPQLFGTPTVSDGIGMGTEGMKYSLVSREVIADSIETCVNGLWQDGVVVIGGCDKNMPGGMMALVRTNVPGIYVYGGTIKPGHYKGRDLNIVSVFEAVGEFIAGQLDPVDFKEIEKRACPGSGSCGGMYTANTMSAAFEALGMSLPYSSTMANEDAEKLASAAESARVLVEAIKRGLRPRDIVTREAIENAVSVIMATGGSTNAVLHFLAIAHAAEVPWTIDDFERIRRRVPVIVDMKPSGRYLATDLHQAGGIPQVMKLLLDAGLLHGACVTITGQTIAEVLENVPAAPRADQGVIRTLSDPLYAEGHLAILRGNLSPEGCVAKISGLKNPAITGPARVFDSEDDAMAAIMARRIVEGDVVVIRYEGPKGGPGMREMLAPTSALVGQGLGESVGLITDGRFSGGTWGMVVGHVSPEAFVGGPIALVREGDSVTIDAHRQLVQLNVGDEELARRAADWTPPSPRYTRGVLAKFAKFASSASKGAVTDLDL.

Cys57 contacts [2Fe-2S] cluster. Mg(2+) is bound at residue Asp89. Cys130 lines the [2Fe-2S] cluster pocket. Positions 131 and 132 each coordinate Mg(2+). Lys132 carries the post-translational modification N6-carboxylysine. Cys202 is a binding site for [2Fe-2S] cluster. Glu454 provides a ligand contact to Mg(2+). The Proton acceptor role is filled by Ser480.

The protein belongs to the IlvD/Edd family. As to quaternary structure, homodimer. Requires [2Fe-2S] cluster as cofactor. Mg(2+) is required as a cofactor.

It carries out the reaction (2R)-2,3-dihydroxy-3-methylbutanoate = 3-methyl-2-oxobutanoate + H2O. It catalyses the reaction (2R,3R)-2,3-dihydroxy-3-methylpentanoate = (S)-3-methyl-2-oxopentanoate + H2O. Its pathway is amino-acid biosynthesis; L-isoleucine biosynthesis; L-isoleucine from 2-oxobutanoate: step 3/4. It functions in the pathway amino-acid biosynthesis; L-valine biosynthesis; L-valine from pyruvate: step 3/4. Functions in the biosynthesis of branched-chain amino acids. Catalyzes the dehydration of (2R,3R)-2,3-dihydroxy-3-methylpentanoate (2,3-dihydroxy-3-methylvalerate) into 2-oxo-3-methylpentanoate (2-oxo-3-methylvalerate) and of (2R)-2,3-dihydroxy-3-methylbutanoate (2,3-dihydroxyisovalerate) into 2-oxo-3-methylbutanoate (2-oxoisovalerate), the penultimate precursor to L-isoleucine and L-valine, respectively. The polypeptide is Dihydroxy-acid dehydratase 1 (Aromatoleum aromaticum (strain DSM 19018 / LMG 30748 / EbN1) (Azoarcus sp. (strain EbN1))).